We begin with the raw amino-acid sequence, 107 residues long: Integration host factor subunit beta (107 aa).

A disordered region spans residues 55 to 107 (RRPARVGRNPKSGEKVQVPEKHVPHFKPGKELRERVDGRAGEPLKNDEPEDAQ). Basic and acidic residues predominate over residues 65–101 (KSGEKVQVPEKHVPHFKPGKELRERVDGRAGEPLKND).

Belongs to the bacterial histone-like protein family. Heterodimer of an alpha and a beta chain.

Functionally, this protein is one of the two subunits of integration host factor, a specific DNA-binding protein that functions in genetic recombination as well as in transcriptional and translational control. In Burkholderia pseudomallei (strain K96243), this protein is Integration host factor subunit beta.